A 239-amino-acid chain; its full sequence is Small ribosomal subunit protein uS2 (239 aa).

This sequence belongs to the universal ribosomal protein uS2 family.

This is Small ribosomal subunit protein uS2 from Francisella philomiragia subsp. philomiragia (strain ATCC 25017 / CCUG 19701 / FSC 153 / O#319-036).